The following is a 134-amino-acid chain: Holo-[acyl-carrier-protein] synthase (134 aa).

Residues D8 and E57 each contribute to the Mg(2+) site.

The protein belongs to the P-Pant transferase superfamily. AcpS family. Mg(2+) is required as a cofactor.

It localises to the cytoplasm. The enzyme catalyses apo-[ACP] + CoA = holo-[ACP] + adenosine 3',5'-bisphosphate + H(+). Functionally, transfers the 4'-phosphopantetheine moiety from coenzyme A to a Ser of acyl-carrier-protein. This chain is Holo-[acyl-carrier-protein] synthase, found in Rhizobium johnstonii (strain DSM 114642 / LMG 32736 / 3841) (Rhizobium leguminosarum bv. viciae).